Here is a 622-residue protein sequence, read N- to C-terminus: DNA-directed RNA polymerase subunit gamma (622 aa).

Residues Cys-70, Cys-72, Cys-85, and Cys-88 each contribute to the Zn(2+) site. Residues Asp-466, Asp-468, and Asp-470 each contribute to the Mg(2+) site.

Belongs to the RNA polymerase beta' chain family. RpoC1 subfamily. In terms of assembly, in cyanobacteria the RNAP catalytic core is composed of 2 alpha, 1 beta, 1 beta', 1 gamma and 1 omega subunit. When a sigma factor is associated with the core the holoenzyme is formed, which can initiate transcription. Requires Mg(2+) as cofactor. It depends on Zn(2+) as a cofactor.

It carries out the reaction RNA(n) + a ribonucleoside 5'-triphosphate = RNA(n+1) + diphosphate. Functionally, DNA-dependent RNA polymerase catalyzes the transcription of DNA into RNA using the four ribonucleoside triphosphates as substrates. This Thermosynechococcus vestitus (strain NIES-2133 / IAM M-273 / BP-1) protein is DNA-directed RNA polymerase subunit gamma.